We begin with the raw amino-acid sequence, 291 residues long: Insulin-like growth factor-binding protein 3 (291 aa).

The signal sequence occupies residues 1–27; sequence MQRARPTLWAAALTLLVLLRGPPVARA. The interval 28-134 is IGF-binding; it reads GASSAGLGPV…AYLLPAPPAP (107 aa). The IGFBP N-terminal domain occupies 36–117; that stretch reads PVVRCEPCDA…LDGRGLCVNA (82 aa). 6 disulfide bridges follow: Cys-40/Cys-67, Cys-43/Cys-69, Cys-51/Cys-70, Cys-58/Cys-73, Cys-81/Cys-94, and Cys-88/Cys-114. 2 N-linked (GlcNAc...) (complex) asparagine glycosylation sites follow: Asn-116 and Asn-136. Disordered stretches follow at residues 130-162 and 189-211; these read APPA…RVSD and DYES…TEYG. Residues 146-156 are compositionally biased toward low complexity; sequence AGSVESPSVSS. Ser-148 carries the phosphoserine; by FAM20C modification. A compositionally biased stretch (polar residues) spans 191 to 202; sequence ESQSTDTQNFSS. Residue Ser-194 is modified to Phosphoserine; by CK2. Asn-199 is a glycosylation site (N-linked (GlcNAc...) (complex) asparagine). Ser-201 carries the post-translational modification Phosphoserine; by FAM20C. Ser-202 carries the phosphoserine; by CK2 modification. Positions 210-285 constitute a Thyroglobulin type-1 domain; that stretch reads YGPCRREMED…TTKGKEDVHC (76 aa). Intrachain disulfides connect Cys-213-Cys-240, Cys-251-Cys-262, and Cys-264-Cys-285.

As to quaternary structure, interacts with XLKD1. Binds IGF2 more than IGF1. Forms a ternary complex of about 140 to 150 kDa with IGF1 or IGF2 and a 85 kDa glycoprotein (ALS). Interacts with humanin; humanin competes with importin KPNB1 for binding to IGFBP3, blocking IGFBP3 nuclear import and IGFBP3-mediated apoptosis. Interacts with TMEM219. Interacts with RXRA; this interaction modulates the transcriptional activity of RXRA. Interacts with LRP1; this interaction mediates cell growth inhibition independent of IGF1. Post-translationally, phosphorylated by FAM20C in the extracellular medium. Phosphorylated by CK2; resulting in decreased nuclear localization. As to expression, expressed by most tissues. Present in plasma.

Its subcellular location is the secreted. The protein resides in the nucleus. Its function is as follows. Multifunctional protein that plays a critical role in regulating the availability of IGFs such as IGF1 and IGF2 to their receptors and thereby regulates IGF-mediated cellular processes including proliferation, differentiation, and apoptosis in a cell-type specific manner. Also exhibits IGF-independent antiproliferative and apoptotic effects mediated by its receptor TMEM219/IGFBP-3R. Inhibits the positive effect of humanin on insulin sensitivity. Promotes testicular germ cell apoptosis. Acts via LRP-1/alpha2M receptor, also known as TGF-beta type V receptor, to mediate cell growth inhibition independent of IGF1. Mechanistically, induces serine-specific dephosphorylation of IRS1 or IRS2 upon ligation to its receptor, leading to the inhibitory cascade. In the nucleus, interacts with transcription factors such as retinoid X receptor-alpha/RXRA to regulate transcriptional signaling and apoptosis. This Homo sapiens (Human) protein is Insulin-like growth factor-binding protein 3 (IGFBP3).